Reading from the N-terminus, the 963-residue chain is Exportin-T (963 aa).

At Met-1 the chain carries N-acetylmethionine. Lys-635 carries the N6-acetyllysine modification.

It belongs to the exportin family. Found in a complex with XPOT, Ran and tRNA. Probably found in a complex with nucleoporins. Interacts with Ran and tRNA in a GTP-dependent manner.

It localises to the nucleus. The protein localises to the cytoplasm. Its function is as follows. Mediates the nuclear export of aminoacylated tRNAs. In the nucleus binds to tRNA and to the GTPase Ran in its active GTP-bound form. Docking of this trimeric complex to the nuclear pore complex (NPC) is mediated through binding to nucleoporins. Upon transit of a nuclear export complex into the cytoplasm, disassembling of the complex and hydrolysis of Ran-GTP to Ran-GDP (induced by RANBP1 and RANGAP1, respectively) cause release of the tRNA from the export receptor. XPOT then return to the nuclear compartment and mediate another round of transport. The directionality of nuclear export is thought to be conferred by an asymmetric distribution of the GTP- and GDP-bound forms of Ran between the cytoplasm and nucleus. The polypeptide is Exportin-T (Xpot) (Mus musculus (Mouse)).